The sequence spans 403 residues: S-adenosylmethionine synthase (403 aa).

Histidine 16 is a binding site for ATP. Residue aspartate 18 coordinates Mg(2+). Glutamate 44 serves as a coordination point for K(+). L-methionine is bound by residues glutamate 57 and glutamine 100. The interval 100–110 (QSPDIAQGVDR) is flexible loop. The interval 106 to 126 (QGVDRSYESRSGSASTDAHDL) is disordered. Residues 176-178 (DGK), 248-249 (KF), aspartate 257, 263-264 (RK), alanine 280, and lysine 284 each bind ATP. Residue aspartate 257 participates in L-methionine binding. L-methionine is bound at residue lysine 288.

It belongs to the AdoMet synthase family. As to quaternary structure, homotetramer; dimer of dimers. The cofactor is Mg(2+). It depends on K(+) as a cofactor.

It localises to the cytoplasm. It catalyses the reaction L-methionine + ATP + H2O = S-adenosyl-L-methionine + phosphate + diphosphate. The protein operates within amino-acid biosynthesis; S-adenosyl-L-methionine biosynthesis; S-adenosyl-L-methionine from L-methionine: step 1/1. Its function is as follows. Catalyzes the formation of S-adenosylmethionine (AdoMet) from methionine and ATP. The overall synthetic reaction is composed of two sequential steps, AdoMet formation and the subsequent tripolyphosphate hydrolysis which occurs prior to release of AdoMet from the enzyme. This Clavibacter michiganensis subsp. michiganensis (strain NCPPB 382) protein is S-adenosylmethionine synthase.